A 34-amino-acid chain; its full sequence is MSGELLNAALLSFGLIFVGWALGALLLKIQGAEE.

The helical transmembrane segment at 9–29 (ALLSFGLIFVGWALGALLLKI) threads the bilayer.

The protein belongs to the PetM family. In terms of assembly, the 4 large subunits of the cytochrome b6-f complex are cytochrome b6, subunit IV (17 kDa polypeptide, PetD), cytochrome f and the Rieske protein, while the 4 small subunits are PetG, PetL, PetM and PetN. The complex functions as a dimer.

It localises to the cellular thylakoid membrane. In terms of biological role, component of the cytochrome b6-f complex, which mediates electron transfer between photosystem II (PSII) and photosystem I (PSI), cyclic electron flow around PSI, and state transitions. The sequence is that of Cytochrome b6-f complex subunit 7 from Nostoc sp. (strain PCC 7120 / SAG 25.82 / UTEX 2576).